A 567-amino-acid chain; its full sequence is 2-succinyl-5-enolpyruvyl-6-hydroxy-3-cyclohexene-1-carboxylate synthase (567 aa).

It belongs to the TPP enzyme family. MenD subfamily. As to quaternary structure, homodimer. The cofactor is Mg(2+). Mn(2+) serves as cofactor. Thiamine diphosphate is required as a cofactor.

The catalysed reaction is isochorismate + 2-oxoglutarate + H(+) = 5-enolpyruvoyl-6-hydroxy-2-succinyl-cyclohex-3-ene-1-carboxylate + CO2. It participates in quinol/quinone metabolism; 1,4-dihydroxy-2-naphthoate biosynthesis; 1,4-dihydroxy-2-naphthoate from chorismate: step 2/7. The protein operates within quinol/quinone metabolism; menaquinone biosynthesis. In terms of biological role, catalyzes the thiamine diphosphate-dependent decarboxylation of 2-oxoglutarate and the subsequent addition of the resulting succinic semialdehyde-thiamine pyrophosphate anion to isochorismate to yield 2-succinyl-5-enolpyruvyl-6-hydroxy-3-cyclohexene-1-carboxylate (SEPHCHC). This is 2-succinyl-5-enolpyruvyl-6-hydroxy-3-cyclohexene-1-carboxylate synthase from Yersinia pseudotuberculosis serotype O:1b (strain IP 31758).